The primary structure comprises 534 residues: Ethanolamine kinase (534 aa).

Serine 23 is modified (phosphoserine).

The protein belongs to the choline/ethanolamine kinase family.

The protein localises to the cytoplasm. The enzyme catalyses ethanolamine + ATP = phosphoethanolamine + ADP + H(+). It catalyses the reaction choline + ATP = phosphocholine + ADP + H(+). The protein operates within phospholipid metabolism; phosphatidylethanolamine biosynthesis; phosphatidylethanolamine from ethanolamine: step 1/3. Its function is as follows. Catalyzes the committed step of phosphatidylethanolamine synthesis via the CDP-ethanolamine branch of the Kennedy pathway. Also exhibits choline kinase activity, thus contributing to phosphatidylcholine synthesis via the CDP-choline pathway, but its preferred substrate is ethanolamine. The chain is Ethanolamine kinase (EKI1) from Saccharomyces cerevisiae (strain ATCC 204508 / S288c) (Baker's yeast).